The chain runs to 137 residues: Ribosomal RNA large subunit methyltransferase H (137 aa).

S-adenosyl-L-methionine is bound by residues leucine 56, glycine 85, and 104–109 (LSPLTF).

This sequence belongs to the RNA methyltransferase RlmH family. In terms of assembly, homodimer.

Its subcellular location is the cytoplasm. It carries out the reaction pseudouridine(1915) in 23S rRNA + S-adenosyl-L-methionine = N(3)-methylpseudouridine(1915) in 23S rRNA + S-adenosyl-L-homocysteine + H(+). Specifically methylates the pseudouridine at position 1915 (m3Psi1915) in 23S rRNA. This Prochlorococcus marinus (strain MIT 9515) protein is Ribosomal RNA large subunit methyltransferase H.